Consider the following 364-residue polypeptide: Alanine racemase (364 aa).

Lysine 35 (proton acceptor; specific for D-alanine) is an active-site residue. Position 35 is an N6-(pyridoxal phosphate)lysine (lysine 35). Arginine 132 lines the substrate pocket. Catalysis depends on tyrosine 260, which acts as the Proton acceptor; specific for L-alanine. Position 308 (methionine 308) interacts with substrate.

It belongs to the alanine racemase family. Pyridoxal 5'-phosphate is required as a cofactor.

The catalysed reaction is L-alanine = D-alanine. The protein operates within amino-acid biosynthesis; D-alanine biosynthesis; D-alanine from L-alanine: step 1/1. Functionally, catalyzes the interconversion of L-alanine and D-alanine. May also act on other amino acids. The sequence is that of Alanine racemase (alr) from Acidithiobacillus ferrooxidans (strain ATCC 23270 / DSM 14882 / CIP 104768 / NCIMB 8455) (Ferrobacillus ferrooxidans (strain ATCC 23270)).